The following is a 131-amino-acid chain: Small ribosomal subunit protein uS11 (131 aa).

This sequence belongs to the universal ribosomal protein uS11 family. As to quaternary structure, part of the 30S ribosomal subunit. Interacts with proteins S7 and S18. Binds to IF-3.

In terms of biological role, located on the platform of the 30S subunit, it bridges several disparate RNA helices of the 16S rRNA. Forms part of the Shine-Dalgarno cleft in the 70S ribosome. The chain is Small ribosomal subunit protein uS11 from Exiguobacterium sp. (strain ATCC BAA-1283 / AT1b).